Here is a 392-residue protein sequence, read N- to C-terminus: Odorant receptor 85f (392 aa).

Over 1–36 (MEPVQYSYEDFARLPTTVFWIMGYDMLGVPKTRSRR) the chain is Cytoplasmic. A helical transmembrane segment spans residues 37–57 (ILYWIYRFLCLASHGVCVGVM). At 58 to 69 (VFRMVEAKTIDN) the chain is on the extracellular side. N-linked (GlcNAc...) asparagine glycosylation is present at Asn69. Residues 70-90 (VSLIMRYATLVTYIINSDTKF) traverse the membrane as a helical segment. Residues 91 to 130 (ATVLQRSAIQSLNSKLAELYPKTTLDRIYHRVNDHYWTKS) are Cytoplasmic-facing. A helical transmembrane segment spans residues 131–151 (FVYLVIIYIGSSIMVVIGPII). The Extracellular portion of the chain corresponds to 152–179 (TSIIAYFTHNVFTYMHCYPYFLYDPEKD). Residues 180-200 (PVWIYISIYALEWLHSTQMVI) traverse the membrane as a helical segment. Residues 201 to 268 (SNIGADIWLL…NDLNGIFGKS (68 aa)) lie on the Cytoplasmic side of the membrane. Residues 269–289 (LLLSLLTTAAVICTVAVYTLI) form a helical membrane-spanning segment. Residues 290–295 (QGPTLE) are Extracellular-facing. The helical transmembrane segment at 296–316 (GFTYVIFIGTSVMQVYLVCYY) threads the bilayer. At 317–363 (GQQVLDLSGEVAHAVYNHDFHDASIAYKRYLLIIIIRAQQPVELNAM) the chain is on the cytoplasmic side. Residues 364–384 (GYLSISLDTFKQLMSVSYRVI) traverse the membrane as a helical segment. Residues 385-392 (TMLMQMIQ) lie on the Extracellular side of the membrane.

It belongs to the insect chemoreceptor superfamily. Heteromeric odorant receptor channel (TC 1.A.69) family. Or49a subfamily. As to quaternary structure, interacts with Orco. Complexes exist early in the endomembrane system in olfactory sensory neurons (OSNs), coupling these complexes to the conserved ciliary trafficking pathway. In terms of tissue distribution, expressed in olfactory sensory neurons in the antenna.

The protein resides in the cell membrane. Odorant receptor which mediates acceptance or avoidance behavior, depending on its substrates. The odorant receptor repertoire encodes a large collection of odor stimuli that vary widely in identity, intensity, and duration. May form a complex with Orco to form odorant-sensing units, providing sensitive and prolonged odorant signaling and calcium permeability. This Drosophila melanogaster (Fruit fly) protein is Odorant receptor 85f (Or85f).